Reading from the N-terminus, the 479-residue chain is Replication factor C large subunit (479 aa).

56–63 provides a ligand contact to ATP; the sequence is GPPGVGKT. Over residues 435 to 461 the composition is skewed to basic and acidic residues; it reads LGEKPLEPQEAKARRRGEKASRDEGRK. A disordered region spans residues 435-479; sequence LGEKPLEPQEAKARRRGEKASRDEGRKAGKRERKGVGLDFFLGEQ.

This sequence belongs to the activator 1 small subunits family. RfcL subfamily. In terms of assembly, heteromultimer composed of small subunits (RfcS) and large subunits (RfcL).

Part of the RFC clamp loader complex which loads the PCNA sliding clamp onto DNA. The sequence is that of Replication factor C large subunit from Aeropyrum pernix (strain ATCC 700893 / DSM 11879 / JCM 9820 / NBRC 100138 / K1).